A 140-amino-acid chain; its full sequence is Endoribonuclease YbeY (140 aa).

Residues His-100, His-104, and His-110 each coordinate Zn(2+).

It belongs to the endoribonuclease YbeY family. Zn(2+) serves as cofactor.

The protein resides in the cytoplasm. Single strand-specific metallo-endoribonuclease involved in late-stage 70S ribosome quality control and in maturation of the 3' terminus of the 16S rRNA. The protein is Endoribonuclease YbeY of Helicobacter pylori (strain P12).